A 245-amino-acid polypeptide reads, in one-letter code: NAD-dependent protein deacetylase (245 aa).

The Deacetylase sirtuin-type domain occupies 1-245 (MIFVQQFEEV…EFVEGLSSIK (245 aa)). NAD(+) is bound by residues Ala26, Thr30, Phe37, Arg38, Gln105, Ile107, Asp108, and His123. Residue Phe37 coordinates nicotinamide. Nicotinamide-binding residues include Ile107 and Asp108. The Proton acceptor role is filled by His123. Residues Cys131, Cys134, Cys151, and Cys154 each coordinate Zn(2+). NAD(+)-binding residues include Thr190, Ser191, Asn216, and Ile234.

The protein belongs to the sirtuin family. Class U subfamily. It depends on Zn(2+) as a cofactor.

It is found in the cytoplasm. The catalysed reaction is N(6)-acetyl-L-lysyl-[protein] + NAD(+) + H2O = 2''-O-acetyl-ADP-D-ribose + nicotinamide + L-lysyl-[protein]. In terms of biological role, NAD-dependent protein deacetylase which modulates the activities of several enzymes which are inactive in their acetylated form. The chain is NAD-dependent protein deacetylase from Bacillus thuringiensis subsp. konkukian (strain 97-27).